Reading from the N-terminus, the 113-residue chain is Hydrogenase maturation factor HypA (113 aa).

His2 lines the Ni(2+) pocket. Zn(2+)-binding residues include Cys73, Cys76, Cys89, and Cys92.

The protein belongs to the HypA/HybF family.

In terms of biological role, involved in the maturation of [NiFe] hydrogenases. Required for nickel insertion into the metal center of the hydrogenase. This chain is Hydrogenase maturation factor HypA, found in Dechloromonas aromatica (strain RCB).